The sequence spans 86 residues: Muscarinic toxin 7 (86 aa).

Positions 1 to 21 are cleaved as a signal peptide; sequence MKTLLLTLVVVTIVCLDLGYT. Finger loop stretches follow at residues 23-37, 44-63, and 66-78; these read TCVK…TSED, LCFK…TRGC, and TCPK…VINC. Disulfide bonds link Cys24/Cys45, Cys38/Cys63, Cys67/Cys78, and Cys79/Cys84.

Belongs to the three-finger toxin family. Short-chain subfamily. Aminergic toxin sub-subfamily. As to expression, expressed by the venom gland.

It is found in the secreted. Binds specifically and irreversibly to an allosteric site of the muscarinic acetylcholine M1 receptor (CHRM1) at subnanomolar concentrations and shows a very slow dissociation rate. It also inhibits agonist-mediated guanosine 5'-O-(3'-thiotriphosphate) (GTP-g-S) binding and downstream signaling, and decreases the dissociation rate of orthosteric antagonists (N-methylscopolamine (NMS) or pirenzepine). Is a potent negative allosteric modulator (NAM) for CHRM1 activation and a positive allosteric modulator (PAM) for antagonist binding. This Dendroaspis angusticeps (Eastern green mamba) protein is Muscarinic toxin 7.